The primary structure comprises 194 residues: GTTPNSEGWHDGYYYSWWSDGGGDSTYTNNSGGTYEITWGNGGNLVGGKGWNPGLNARAIHFTGVYQPNGTSYLSVYGWTRNPLVEYYIVENFGSSNPSSGSTDLGTVSCDGSTYTLGQSTRYNAPSIDGTQTFNQYWSVRQDKRSSGTVQTGCHFDAWASAGLNVTGDHYYQIVATEGYFSSGYARITVADVG.

At Gly1 the chain carries N-acetylglycine. A GH11 domain is found at 1–191; it reads GTTPNSEGWH…SSGYARITVA (191 aa). Catalysis depends on Glu86, which acts as the Nucleophile. The cysteines at positions 110 and 154 are disulfide-linked. Residue Glu178 is the Proton donor of the active site.

This sequence belongs to the glycosyl hydrolase 11 (cellulase G) family.

It catalyses the reaction Endohydrolysis of (1-&gt;4)-beta-D-xylosidic linkages in xylans.. The protein operates within glycan degradation; xylan degradation. This chain is Endo-1,4-beta-xylanase, found in Byssochlamys spectabilis (Paecilomyces variotii).